A 77-amino-acid chain; its full sequence is MKLIIFTGLILFAIVSLIEAQANNEKACLPQYQVCTDAPGNCCSNLVCDCYGRYKSGARIGRNCFCLLKGVIYKREN.

The first 20 residues, 1 to 20, serve as a signal peptide directing secretion; sequence MKLIIFTGLILFAIVSLIEA. The propeptide occupies 21–26; sequence QANNEK.

The protein belongs to the neurotoxin 19 (CSTX) family. 08 (U8-Lctx) subfamily. Post-translationally, contains 4 disulfide bonds. As to expression, expressed by the venom gland.

Its subcellular location is the secreted. In Lycosa singoriensis (Wolf spider), this protein is U8-lycotoxin-Ls1j.